The primary structure comprises 51 residues: Large ribosomal subunit protein eL39 (51 aa).

This sequence belongs to the eukaryotic ribosomal protein eL39 family.

This Thermococcus onnurineus (strain NA1) protein is Large ribosomal subunit protein eL39.